The chain runs to 183 residues: Gene BABR protein 2 (183 aa).

This chain is Gene BABR protein 2, found in Babesia bovis.